Consider the following 1070-residue polypeptide: MLGDGNAGMSTIPGLNQIQFEGFCRFIDQGLTEELYKFPKIEDTDQEIEFQLFVETYQLVEPLLKERDAVYESFTYSSELYVSAGLIWKSRGDMQEQTIFIGNIPLMNSLGTSIVNGIYRIVINQILQSPGIYYRSELGHNGISVYTGTIISDWGGRFELEIDRKARIWARVSRKQKVSILVLSAAMGSNLREILENICYPEIFLSFLTNKEKKKIGSKENAILEFYQQFACVGGDPVFSESLCKELQKKFFHQRCELGKIGRRNMNQRLNLNIPQNNTFLLPRDVLAAVDHLIGLKFGMGTLDDMNHLKNKRIRSVANLLQDQFGLALVRLENVIRGTICGAIRHKLMPTPQNLVTSTPLTTTYDSFFGLHPLSQVLDRTNPLTQIVHGRKLSYLGPGGLTGRTASFRVRDIHPSHYGRICPIDTSEGINVGLIGSLAIHARIGYWGSLESPFYEIFEKSKKVRMLYLSPSRDEYYMVAAGNSLALNQGSPEEQVVPTRYRQEFLTIAWEQVHLRSIFPFQYFSIGASLIPFIEHNDANRALMSSNMQRQAVPLVRSEKCIVGTGLEPQVALDSGVPAIAEHEGKIIYTDIDKIVLSGNGNTYSIPLIMYQRSNKNTCMHQKPQVGRGKCIKKGQVLADGAATVGGELALGKNILVAYMPWEGYNFEDAVLISERLIYRDIYTSFHIRKYEIQTHVTSQGPERITNEIPHLEARLLRNLDKNGIVMLGSWVETGDILVGKLTPQAAKESSYAPEDRLLRAILGIQVSTSKETCLKLPIGGRGRVIDVRWVQKKGGSSYNPETICVYISQKREIKVGDKVAGRHGNKGIVSKILPRQDMPYLQDGRPVDMVFNPLGVPSRMNVGQIFECSLGLAGGLLNRHYRIAPFDERYEQEASRKLVFSELYEASKQTANPWVFEPEYPGKSRIFDGRTGDPFEEPVLIGKPYILKLIHQVDDKVHGRSSGHYALVTQQPLRGRSKQGGQRVGEMEVWALEGFGVAHILQEMLTYKSDHIRARQEVLGTTIIGETIPNPEDAPESFRLLVRELRSLALELNHFVVSEKNFQINKKEA.

The protein belongs to the RNA polymerase beta chain family. In terms of assembly, in plastids the minimal PEP RNA polymerase catalytic core is composed of four subunits: alpha, beta, beta', and beta''. When a (nuclear-encoded) sigma factor is associated with the core the holoenzyme is formed, which can initiate transcription.

The protein localises to the plastid. The protein resides in the chloroplast. It carries out the reaction RNA(n) + a ribonucleoside 5'-triphosphate = RNA(n+1) + diphosphate. Its function is as follows. DNA-dependent RNA polymerase catalyzes the transcription of DNA into RNA using the four ribonucleoside triphosphates as substrates. In Citrus sinensis (Sweet orange), this protein is DNA-directed RNA polymerase subunit beta.